The chain runs to 1212 residues: Myosin-1 (1212 aa).

Residues 1–35 form a disordered region; the sequence is MGITRRGKDKAAAGQAVAGGASGGRARPKKATFET. Residues 41-715 form the Myosin motor domain; it reads VGVSDLTLLS…TLFALEHMRD (675 aa). 134 to 141 provides a ligand contact to ATP; that stretch reads GESGAGKT. The tract at residues 405 to 487 is actin-binding; that stretch reads SVGILDIYGF…PGVFSALKDA (83 aa). IQ domains follow at residues 719-739 and 740-765; these read HNMA…RAES and ATRI…HGHR. The 190-residue stretch at 773–962 folds into the TH1 domain; the sequence is RRRMSILGSR…AVHTQQGEPP (190 aa). 2 disordered regions span residues 947 to 1064 and 1115 to 1212; these read DFYK…APPA and PAAY…DDDW. Residues 954-966 show a composition bias toward polar residues; that stretch reads VHTQQGEPPNSVS. Low complexity-rich tracts occupy residues 987–998 and 1008–1052; these read RPGGPNGRPARG and PGGA…ASVR. Residues 1053–1062 show a composition bias toward pro residues; that stretch reads APPPPPPAAP. Positions 1065–1124 constitute an SH3 domain; the sequence is KAKIMAKVLYDFAGQKENEMSIKEGDLIEIVQKENNGWWLAKSGNQQAWVPAAYVEEQKQ. Residues 1125-1140 are compositionally biased toward pro residues; it reads APPPVAASRPPPPAPP. The span at 1171–1190 shows a compositional bias: polar residues; the sequence is MSLNGSDGSRSNTPTPSLGN.

It belongs to the TRAFAC class myosin-kinesin ATPase superfamily. Myosin family.

It localises to the cytoplasm. The protein localises to the cytoskeleton. It is found in the actin patch. In terms of biological role, type-I myosin implicated in the organization of the actin cytoskeleton. Required for proper actin cytoskeleton polarization. At the cell cortex, assembles in patch-like structures together with proteins from the actin-polymerizing machinery and promotes actin assembly. Functions as actin nucleation-promoting factor (NPF) for the Arp2/3 complex. In Pyricularia oryzae (strain 70-15 / ATCC MYA-4617 / FGSC 8958) (Rice blast fungus), this protein is Myosin-1 (MYO1).